The chain runs to 86 residues: Translation initiation factor IF-1 (86 aa).

Residues 1-72 enclose the S1-like domain; it reads MPKDDVIKME…TKGRIVYRKK (72 aa).

Belongs to the IF-1 family. Component of the 30S ribosomal translation pre-initiation complex which assembles on the 30S ribosome in the order IF-2 and IF-3, IF-1 and N-formylmethionyl-tRNA(fMet); mRNA recruitment can occur at any time during PIC assembly.

Its subcellular location is the cytoplasm. One of the essential components for the initiation of protein synthesis. Stabilizes the binding of IF-2 and IF-3 on the 30S subunit to which N-formylmethionyl-tRNA(fMet) subsequently binds. Helps modulate mRNA selection, yielding the 30S pre-initiation complex (PIC). Upon addition of the 50S ribosomal subunit IF-1, IF-2 and IF-3 are released leaving the mature 70S translation initiation complex. This is Translation initiation factor IF-1 from Pseudothermotoga lettingae (strain ATCC BAA-301 / DSM 14385 / NBRC 107922 / TMO) (Thermotoga lettingae).